The following is a 568-amino-acid chain: Urease subunit alpha (568 aa).

Ni(2+)-binding residues include H134, H136, and K217. N6-carboxylysine is present on K217. H219 contributes to the substrate binding site. Ni(2+) contacts are provided by H246 and H272. The Proton donor role is filled by H320. D360 is a Ni(2+) binding site.

The protein belongs to the metallo-dependent hydrolases superfamily. Urease alpha subunit family. Heterotrimer of UreA (gamma), UreB (beta) and UreC (alpha) subunits. Three heterotrimers associate to form the active enzyme. Ni cation is required as a cofactor. Carboxylation allows a single lysine to coordinate two nickel ions.

It is found in the cytoplasm. The enzyme catalyses urea + 2 H2O + H(+) = hydrogencarbonate + 2 NH4(+). The protein operates within nitrogen metabolism; urea degradation; CO(2) and NH(3) from urea (urease route): step 1/1. The sequence is that of Urease subunit alpha from Marinomonas sp. (strain MWYL1).